Consider the following 425-residue polypeptide: Riboflavin biosynthesis protein RibBA (425 aa).

The DHBP synthase stretch occupies residues 1 to 204 (MTRLDSVERA…IADLIEWRRK (204 aa)). Residues 28-29 (RE), D33, 141-145 (RPGHT), and E165 each bind D-ribulose 5-phosphate. Mg(2+) is bound at residue E29. Residue H144 coordinates Mg(2+). Positions 205–425 (HEKHIERIAE…HLPGEFGGAL (221 aa)) are GTP cyclohydrolase II. 259-263 (RVHSE) is a GTP binding site. Zn(2+) is bound by residues C264, C275, and C277. GTP-binding positions include Q280, 303–305 (EGR), and T325. D337 acts as the Proton acceptor; for GTP cyclohydrolase activity in catalysis. R339 acts as the Nucleophile; for GTP cyclohydrolase activity in catalysis. The GTP site is built by T360 and K365.

The protein in the N-terminal section; belongs to the DHBP synthase family. In the C-terminal section; belongs to the GTP cyclohydrolase II family. It depends on Mg(2+) as a cofactor. Requires Mn(2+) as cofactor. The cofactor is Zn(2+).

It catalyses the reaction D-ribulose 5-phosphate = (2S)-2-hydroxy-3-oxobutyl phosphate + formate + H(+). It carries out the reaction GTP + 4 H2O = 2,5-diamino-6-hydroxy-4-(5-phosphoribosylamino)-pyrimidine + formate + 2 phosphate + 3 H(+). It functions in the pathway cofactor biosynthesis; riboflavin biosynthesis; 2-hydroxy-3-oxobutyl phosphate from D-ribulose 5-phosphate: step 1/1. The protein operates within cofactor biosynthesis; riboflavin biosynthesis; 5-amino-6-(D-ribitylamino)uracil from GTP: step 1/4. Its function is as follows. Catalyzes the conversion of D-ribulose 5-phosphate to formate and 3,4-dihydroxy-2-butanone 4-phosphate. In terms of biological role, catalyzes the conversion of GTP to 2,5-diamino-6-ribosylamino-4(3H)-pyrimidinone 5'-phosphate (DARP), formate and pyrophosphate. This chain is Riboflavin biosynthesis protein RibBA, found in Mycobacterium avium (strain 104).